Consider the following 395-residue polypeptide: Argininosuccinate synthase (395 aa).

ATP-binding positions include Ala-6 to Ser-14 and Ala-33. L-citrulline is bound at residue Tyr-84. ATP is bound at residue Gly-114. 3 residues coordinate L-aspartate: Thr-116, Asn-120, and Asp-121. Asn-120 provides a ligand contact to L-citrulline. Arg-124, Ser-173, Ser-182, Glu-258, and Tyr-270 together coordinate L-citrulline.

Belongs to the argininosuccinate synthase family. Type 1 subfamily. Homotetramer.

Its subcellular location is the cytoplasm. It carries out the reaction L-citrulline + L-aspartate + ATP = 2-(N(omega)-L-arginino)succinate + AMP + diphosphate + H(+). Its pathway is amino-acid biosynthesis; L-arginine biosynthesis; L-arginine from L-ornithine and carbamoyl phosphate: step 2/3. The chain is Argininosuccinate synthase from Rhodococcoides fascians (Rhodococcus fascians).